The following is a 67-amino-acid chain: Putative sodium channel alpha-toxin Acra7 (67 aa).

In terms of domain architecture, LCN-type CS-alpha/beta spans 2-66 (RDGYIVKPTN…PIKDPNQDCT (65 aa)). Disulfide bonds link Cys12-Cys65, Cys16-Cys37, Cys23-Cys47, and Cys27-Cys49. Arg67 is a propeptide (removed by a carboxypeptidase).

It belongs to the long (4 C-C) scorpion toxin superfamily. Sodium channel inhibitor family. Alpha subfamily. Expressed by the venom gland.

The protein localises to the secreted. Functionally, alpha toxins bind voltage-independently at site-3 of sodium channels (Nav) and inhibit the inactivation of the activated channels, thereby blocking neuronal transmission. The chain is Putative sodium channel alpha-toxin Acra7 from Androctonus crassicauda (Arabian fat-tailed scorpion).